The sequence spans 340 residues: tRNA-specific 2-thiouridylase MnmA (340 aa).

ATP is bound by residues 6 to 13 (AMSGGVDS) and methionine 32. Cysteine 92 (nucleophile) is an active-site residue. A disulfide bridge links cysteine 92 with cysteine 186. Glycine 116 lines the ATP pocket. Positions 134–136 (KDQ) are interaction with tRNA. The Cysteine persulfide intermediate role is filled by cysteine 186. The segment at 288–289 (RY) is interaction with tRNA.

It belongs to the MnmA/TRMU family.

It is found in the cytoplasm. The enzyme catalyses S-sulfanyl-L-cysteinyl-[protein] + uridine(34) in tRNA + AH2 + ATP = 2-thiouridine(34) in tRNA + L-cysteinyl-[protein] + A + AMP + diphosphate + H(+). In terms of biological role, catalyzes the 2-thiolation of uridine at the wobble position (U34) of tRNA, leading to the formation of s(2)U34. This is tRNA-specific 2-thiouridylase MnmA from Campylobacter concisus (strain 13826).